A 128-amino-acid chain; its full sequence is Large ribosomal subunit protein bL12 (128 aa).

It belongs to the bacterial ribosomal protein bL12 family. Homodimer. Part of the ribosomal stalk of the 50S ribosomal subunit. Forms a multimeric L10(L12)X complex, where L10 forms an elongated spine to which 2 to 4 L12 dimers bind in a sequential fashion. Binds GTP-bound translation factors.

Functionally, forms part of the ribosomal stalk which helps the ribosome interact with GTP-bound translation factors. Is thus essential for accurate translation. The sequence is that of Large ribosomal subunit protein bL12 from Brachyspira hyodysenteriae (strain ATCC 49526 / WA1).